A 129-amino-acid polypeptide reads, in one-letter code: uncharacterized protein (129 aa).

The next 2 membrane-spanning stretches (helical) occupy residues 35–55 and 98–118; these read IVDG…WKIP and ILLL…IILL.

The protein resides in the membrane. This is an uncharacterized protein from Saccharomyces cerevisiae (strain ATCC 204508 / S288c) (Baker's yeast).